A 500-amino-acid chain; its full sequence is Perfringolysin O (500 aa).

The N-terminal stretch at 1–28 is a signal peptide; sequence MIRFKKTKLIASIAMALCLFSQPVISFS. 4 beta stranded membrane-spanning segments follow: residues 189–202, 209–218, 287–296, and 304–316; these read KSQI…NAKV, VDFNAVANNE, SKDVQAAFKA, and KNSQ…YENS. Positions 458-468 match the Conserved undecapeptide motif; that stretch reads ECTGLAWEWWR. A Cholesterol binding motif is present at residues 490–491; sequence TL.

This sequence belongs to the cholesterol-dependent cytolysin family. In terms of assembly, homooligomeric pore complex of 35 to 50 subunits; when inserted in the host membrane.

It is found in the secreted. The protein resides in the host cell membrane. In terms of biological role, a cholesterol-dependent toxin that causes cytolysis by forming pores in cholesterol containing host membranes. After binding to target membranes, the protein assembles into a pre-pore complex. A conformation change leads to insertion in the host membrane and formation of an oligomeric pore complex. Cholesterol is required for binding to host cell membranes, membrane insertion and pore formation; cholesterol binding is mediated by a Thr-Leu pair in the C-terminus. Can be reversibly inactivated by oxidation. This is Perfringolysin O (pfo) from Clostridium perfringens (strain ATCC 13124 / DSM 756 / JCM 1290 / NCIMB 6125 / NCTC 8237 / Type A).